The sequence spans 131 residues: Small ribosomal subunit protein uS11 (131 aa).

This sequence belongs to the universal ribosomal protein uS11 family. Part of the 30S ribosomal subunit.

Its function is as follows. Located on the platform of the 30S subunit. This is Small ribosomal subunit protein uS11 from Methanospirillum hungatei JF-1 (strain ATCC 27890 / DSM 864 / NBRC 100397 / JF-1).